The chain runs to 162 residues: ATP synthase subunit b (162 aa).

The chain crosses the membrane as a helical span at residues 6–26; the sequence is PDIGLLFWMLLSFGIVFFVAA.

Belongs to the ATPase B chain family. In terms of assembly, F-type ATPases have 2 components, F(1) - the catalytic core - and F(0) - the membrane proton channel. F(1) has five subunits: alpha(3), beta(3), gamma(1), delta(1), epsilon(1). F(0) has three main subunits: a(1), b(2) and c(10-14). The alpha and beta chains form an alternating ring which encloses part of the gamma chain. F(1) is attached to F(0) by a central stalk formed by the gamma and epsilon chains, while a peripheral stalk is formed by the delta and b chains.

The protein resides in the cell inner membrane. Its function is as follows. F(1)F(0) ATP synthase produces ATP from ADP in the presence of a proton or sodium gradient. F-type ATPases consist of two structural domains, F(1) containing the extramembraneous catalytic core and F(0) containing the membrane proton channel, linked together by a central stalk and a peripheral stalk. During catalysis, ATP synthesis in the catalytic domain of F(1) is coupled via a rotary mechanism of the central stalk subunits to proton translocation. In terms of biological role, component of the F(0) channel, it forms part of the peripheral stalk, linking F(1) to F(0). This Azobacteroides pseudotrichonymphae genomovar. CFP2 protein is ATP synthase subunit b.